A 229-amino-acid chain; its full sequence is 2,3-bisphosphoglycerate-dependent phosphoglycerate mutase (229 aa).

Substrate contacts are provided by residues 7–14, 20–21, R59, 86–89, K97, 113–114, and 182–183; these read RHGQSEWN, TG, ERHY, RR, and GN. Residue H8 is the Tele-phosphohistidine intermediate of the active site. Residue E86 is the Proton donor/acceptor of the active site.

It belongs to the phosphoglycerate mutase family. BPG-dependent PGAM subfamily.

The catalysed reaction is (2R)-2-phosphoglycerate = (2R)-3-phosphoglycerate. It participates in carbohydrate degradation; glycolysis; pyruvate from D-glyceraldehyde 3-phosphate: step 3/5. Its function is as follows. Catalyzes the interconversion of 2-phosphoglycerate and 3-phosphoglycerate. This is 2,3-bisphosphoglycerate-dependent phosphoglycerate mutase from Listeria welshimeri serovar 6b (strain ATCC 35897 / DSM 20650 / CCUG 15529 / CIP 8149 / NCTC 11857 / SLCC 5334 / V8).